The sequence spans 101 residues: Urease subunit beta (101 aa).

It belongs to the urease beta subunit family. In terms of assembly, heterotrimer of UreA (gamma), UreB (beta) and UreC (alpha) subunits. Three heterotrimers associate to form the active enzyme.

The protein resides in the cytoplasm. The enzyme catalyses urea + 2 H2O + H(+) = hydrogencarbonate + 2 NH4(+). It participates in nitrogen metabolism; urea degradation; CO(2) and NH(3) from urea (urease route): step 1/1. In Azoarcus sp. (strain BH72), this protein is Urease subunit beta.